A 176-amino-acid chain; its full sequence is Adenine phosphoribosyltransferase (176 aa).

This sequence belongs to the purine/pyrimidine phosphoribosyltransferase family. Homodimer.

The protein resides in the cytoplasm. The catalysed reaction is AMP + diphosphate = 5-phospho-alpha-D-ribose 1-diphosphate + adenine. Its pathway is purine metabolism; AMP biosynthesis via salvage pathway; AMP from adenine: step 1/1. Its function is as follows. Catalyzes a salvage reaction resulting in the formation of AMP, that is energically less costly than de novo synthesis. In Borrelia garinii subsp. bavariensis (strain ATCC BAA-2496 / DSM 23469 / PBi) (Borreliella bavariensis), this protein is Adenine phosphoribosyltransferase.